The chain runs to 294 residues: 4-hydroxy-tetrahydrodipicolinate synthase (294 aa).

A pyruvate-binding site is contributed by threonine 47. Tyrosine 135 acts as the Proton donor/acceptor in catalysis. Residue lysine 163 is the Schiff-base intermediate with substrate of the active site. Threonine 205 lines the pyruvate pocket.

It belongs to the DapA family. Homotetramer; dimer of dimers.

It localises to the cytoplasm. The enzyme catalyses L-aspartate 4-semialdehyde + pyruvate = (2S,4S)-4-hydroxy-2,3,4,5-tetrahydrodipicolinate + H2O + H(+). Its pathway is amino-acid biosynthesis; L-lysine biosynthesis via DAP pathway; (S)-tetrahydrodipicolinate from L-aspartate: step 3/4. Functionally, catalyzes the condensation of (S)-aspartate-beta-semialdehyde [(S)-ASA] and pyruvate to 4-hydroxy-tetrahydrodipicolinate (HTPA). The protein is 4-hydroxy-tetrahydrodipicolinate synthase of Rickettsia akari (strain Hartford).